A 399-amino-acid polypeptide reads, in one-letter code: 3-sulfinopropanoyl-CoA desulfinase (399 aa).

FAD contacts are provided by residues 121-124 (ICIS), Ser-130, and 153-156 (YWIT). 244 to 245 (YN) is a binding site for substrate. Residues Arg-273, Gln-340, Ser-344, 367–371 (GGTAQ), and Gln-388 contribute to the FAD site.

This sequence belongs to the acyl-CoA dehydrogenase family. Homotrimer or homotetramer. The cofactor is FAD.

It carries out the reaction 3-sulfinopropanoyl-CoA + H2O = propanoyl-CoA + sulfite + H(+). Functionally, catalyzes the conversion 3-sulfinopropanoyl-CoA (3SP-CoA) to propanoyl-CoA by abstraction of sulfite. Does not show dehydrogenase activity. The chain is 3-sulfinopropanoyl-CoA desulfinase from Variovorax paradoxus.